Here is a 635-residue protein sequence, read N- to C-terminus: Chaperone protein HtpG (635 aa).

An a; substrate-binding region spans residues 1-336 (MTTAEAAAPE…SADLPLNLSR (336 aa)). The segment at 337 to 556 (EMLQDSAILA…ESGIDRRLEK (220 aa)) is b. Residues 557-635 (LLASAGRLGD…RVMQRGLPTA (79 aa)) are c.

It belongs to the heat shock protein 90 family. Homodimer.

It localises to the cytoplasm. Its function is as follows. Molecular chaperone. Has ATPase activity. The protein is Chaperone protein HtpG of Azorhizobium caulinodans (strain ATCC 43989 / DSM 5975 / JCM 20966 / LMG 6465 / NBRC 14845 / NCIMB 13405 / ORS 571).